Here is a 259-residue protein sequence, read N- to C-terminus: Phosphate import ATP-binding protein PstB 1 (259 aa).

Residues I13 to I254 form the ABC transporter domain. G45–S52 lines the ATP pocket.

It belongs to the ABC transporter superfamily. Phosphate importer (TC 3.A.1.7) family. As to quaternary structure, the complex is composed of two ATP-binding proteins (PstB), two transmembrane proteins (PstC and PstA) and a solute-binding protein (PstS).

The protein resides in the cell inner membrane. It catalyses the reaction phosphate(out) + ATP + H2O = ADP + 2 phosphate(in) + H(+). Functionally, part of the ABC transporter complex PstSACB involved in phosphate import. Responsible for energy coupling to the transport system. This chain is Phosphate import ATP-binding protein PstB 1, found in Pseudomonas syringae pv. tomato (strain ATCC BAA-871 / DC3000).